A 473-amino-acid polypeptide reads, in one-letter code: FAD-dependent urate hydroxylase (473 aa).

It belongs to the HpyO family. In terms of assembly, homodimer. It depends on FAD as a cofactor.

It catalyses the reaction urate + NADH + O2 + H(+) = 5-hydroxyisourate + NAD(+) + H2O. The catalysed reaction is urate + NADPH + O2 + H(+) = 5-hydroxyisourate + NADP(+) + H2O. Its pathway is purine metabolism; urate degradation. Functionally, catalyzes the hydroxylation of urate to 5-hydroxyisourate (HIU). Is likely to be involved in the urate degradation pathway to allantoin. Is slightly more efficient (about 2.6 times) with NADPH than NADH as the electron donor. This Xanthomonas campestris pv. campestris (strain ATCC 33913 / DSM 3586 / NCPPB 528 / LMG 568 / P 25) protein is FAD-dependent urate hydroxylase.